Reading from the N-terminus, the 141-residue chain is Small ribosomal subunit protein uS12 (141 aa).

A compositionally biased stretch (polar residues) spans 1–11 (MPTISQLVTTS). The interval 1–22 (MPTISQLVTTSRQDKNYKSKSP) is disordered. Aspartate 102 bears the 3-methylthioaspartic acid mark.

The protein belongs to the universal ribosomal protein uS12 family. As to quaternary structure, part of the 30S ribosomal subunit. Contacts proteins S8 and S17. May interact with IF1 in the 30S initiation complex.

In terms of biological role, with S4 and S5 plays an important role in translational accuracy. Interacts with and stabilizes bases of the 16S rRNA that are involved in tRNA selection in the A site and with the mRNA backbone. Located at the interface of the 30S and 50S subunits, it traverses the body of the 30S subunit contacting proteins on the other side and probably holding the rRNA structure together. The combined cluster of proteins S8, S12 and S17 appears to hold together the shoulder and platform of the 30S subunit. The protein is Small ribosomal subunit protein uS12 of Acholeplasma laidlawii (strain PG-8A).